A 413-amino-acid chain; its full sequence is Glucose-1-phosphatase (413 aa).

A signal peptide spans 1 to 22 (MKKSLLAVAVAGAVLLSSAVQA). Residue arginine 39 participates in substrate binding. Histidine 40 functions as the Nucleophile in the catalytic mechanism. Residues arginine 43, arginine 116, and glutamate 218 each coordinate substrate. Aspartate 312 functions as the Proton donor in the catalytic mechanism.

The protein belongs to the histidine acid phosphatase family. Homodimer.

It is found in the periplasm. It carries out the reaction alpha-D-glucose 1-phosphate + H2O = D-glucose + phosphate. The polypeptide is Glucose-1-phosphatase (agp) (Salmonella typhimurium (strain LT2 / SGSC1412 / ATCC 700720)).